The following is a 275-amino-acid chain: Putative ankyrin repeat protein L715 (275 aa).

4 ANK repeats span residues 94–123 (NINYGLCQAIENYHLKIVELLIDHGADINY), 124–153 (NNGLPLNLAVKNGYYDIIELLIEKKVNTND), 155–183 (IFQLLTHCCQNNLPNSLRILLKENISIDP), and 184–213 (IYSTMVNLCLDNGYAECASILINHNNSDST). The interval 253-275 (NQDESDVGDDAENDIENDIEDDN) is disordered. Acidic residues predominate over residues 255 to 275 (DESDVGDDAENDIENDIEDDN).

The chain is Putative ankyrin repeat protein L715 from Acanthamoeba polyphaga mimivirus (APMV).